A 520-amino-acid chain; its full sequence is GMP synthase [glutamine-hydrolyzing] (520 aa).

A Glutamine amidotransferase type-1 domain is found at 12-205 (KIIVLDYGSQ…AISICGARGD (194 aa)). Cys-89 functions as the Nucleophile in the catalytic mechanism. Residues His-179 and Glu-181 contribute to the active site. Residues 206-395 (WSMDNFIDME…LGMPDEVVWR (190 aa)) form the GMPS ATP-PPase domain. 233–239 (SGGVDSS) contacts ATP.

Homodimer.

It carries out the reaction XMP + L-glutamine + ATP + H2O = GMP + L-glutamate + AMP + diphosphate + 2 H(+). Its pathway is purine metabolism; GMP biosynthesis; GMP from XMP (L-Gln route): step 1/1. In terms of biological role, catalyzes the synthesis of GMP from XMP. The sequence is that of GMP synthase [glutamine-hydrolyzing] from Streptococcus equi subsp. zooepidemicus (strain H70).